The chain runs to 527 residues: Peptide chain release factor 3 (527 aa).

The tr-type G domain occupies 9–277; it reads AKRRTFAIIS…AVVDWAPKPL (269 aa). GTP contacts are provided by residues 18-25, 86-90, and 140-143; these read SHPDAGKT, DTPGH, and NKLD.

Belongs to the TRAFAC class translation factor GTPase superfamily. Classic translation factor GTPase family. PrfC subfamily.

The protein localises to the cytoplasm. Functionally, increases the formation of ribosomal termination complexes and stimulates activities of RF-1 and RF-2. It binds guanine nucleotides and has strong preference for UGA stop codons. It may interact directly with the ribosome. The stimulation of RF-1 and RF-2 is significantly reduced by GTP and GDP, but not by GMP. The chain is Peptide chain release factor 3 from Stutzerimonas stutzeri (strain A1501) (Pseudomonas stutzeri).